We begin with the raw amino-acid sequence, 472 residues long: 3-isopropylmalate dehydratase large subunit (472 aa).

Residues Cys347, Cys407, and Cys410 each coordinate [4Fe-4S] cluster.

The protein belongs to the aconitase/IPM isomerase family. LeuC type 1 subfamily. In terms of assembly, heterodimer of LeuC and LeuD. The cofactor is [4Fe-4S] cluster.

It catalyses the reaction (2R,3S)-3-isopropylmalate = (2S)-2-isopropylmalate. It participates in amino-acid biosynthesis; L-leucine biosynthesis; L-leucine from 3-methyl-2-oxobutanoate: step 2/4. Its function is as follows. Catalyzes the isomerization between 2-isopropylmalate and 3-isopropylmalate, via the formation of 2-isopropylmaleate. In Synechococcus sp. (strain WH7803), this protein is 3-isopropylmalate dehydratase large subunit.